The primary structure comprises 213 residues: MAEKSILEAVKKVLEESPKRNFSESVDLAINLKNLDMNLPKNRVDEEVILPHGLGKELKIGVFAKGDVGLRAKAAGAAYVISDVELDELASDKTRARTLANECDLFIAETQFMPTIGKNLGIVLGPRGKMPIPLLPNKDIGELIQSKQNAIRLRSKDKLTFHVPVGRRTMSPDDLAENVEIIVSRLERVLDKGRHNLRTVYVTTTMGKSERVV.

Belongs to the universal ribosomal protein uL1 family. Part of the 50S ribosomal subunit.

In terms of biological role, binds directly to 23S rRNA. Probably involved in E site tRNA release. Its function is as follows. Protein L1 is also a translational repressor protein, it controls the translation of its operon by binding to its mRNA. This is Large ribosomal subunit protein uL1 from Methanosarcina barkeri (strain Fusaro / DSM 804).